The sequence spans 75 residues: Translation initiation factor IF-1, chloroplastic (75 aa).

It belongs to the IF-1 family. Component of the 30S ribosomal translation pre-initiation complex which assembles on the 30S ribosome in the order IF-2 and IF-3, IF-1 and N-formylmethionyl-tRNA(fMet); mRNA recruitment can occur at any time during PIC assembly.

The protein localises to the plastid. Its subcellular location is the chloroplast. In terms of biological role, one of the essential components for the initiation of protein synthesis. Stabilizes the binding of IF-2 and IF-3 on the 30S subunit to which N-formylmethionyl-tRNA(fMet) subsequently binds. Helps modulate mRNA selection, yielding the 30S pre-initiation complex (PIC). Upon addition of the 50S ribosomal subunit IF-1, IF-2 and IF-3 are released leaving the mature 70S translation initiation complex. The chain is Translation initiation factor IF-1, chloroplastic (infA) from Cucumis sativus (Cucumber).